Consider the following 396-residue polypeptide: Glycerate kinase (396 aa).

This sequence belongs to the glycerate kinase type-2 family.

The protein resides in the cytoplasm. It catalyses the reaction (R)-glycerate + ATP = (2R)-3-phosphoglycerate + ADP + H(+). The protein is Glycerate kinase (GLYCTK) of Macaca fascicularis (Crab-eating macaque).